Consider the following 441-residue polypeptide: 3-phosphoshikimate 1-carboxyvinyltransferase (441 aa).

3 residues coordinate 3-phosphoshikimate: Lys25, Ser26, and Arg30. Position 25 (Lys25) interacts with phosphoenolpyruvate. Phosphoenolpyruvate-binding residues include Gly97 and Arg125. Positions 169, 170, 311, and 338 each coordinate 3-phosphoshikimate. Phosphoenolpyruvate is bound at residue Gln170. The active-site Proton acceptor is the Asp311. The phosphoenolpyruvate site is built by Arg342, Arg383, and Lys410.

This sequence belongs to the EPSP synthase family. In terms of assembly, monomer.

It is found in the cytoplasm. It carries out the reaction 3-phosphoshikimate + phosphoenolpyruvate = 5-O-(1-carboxyvinyl)-3-phosphoshikimate + phosphate. It participates in metabolic intermediate biosynthesis; chorismate biosynthesis; chorismate from D-erythrose 4-phosphate and phosphoenolpyruvate: step 6/7. In terms of biological role, catalyzes the transfer of the enolpyruvyl moiety of phosphoenolpyruvate (PEP) to the 5-hydroxyl of shikimate-3-phosphate (S3P) to produce enolpyruvyl shikimate-3-phosphate and inorganic phosphate. In Chlamydia muridarum (strain MoPn / Nigg), this protein is 3-phosphoshikimate 1-carboxyvinyltransferase.